The chain runs to 108 residues: MNRNQAIIASLCYFSVFIAPIIVPIVAYFVVNEKETKRHAIRSLISHIVPFVGWLFLFIALLGGAVAIDGDSLLPVFVIIGGAVIYFLVVIGIIIWNVIQGIKVLRAA.

3 helical membrane passes run 10-32, 45-67, and 77-99; these read SLCY…FVVN, ISHI…GAVA, and FVII…WNVI.

It localises to the cell membrane. This is an uncharacterized protein from Bacillus subtilis (strain 168).